A 141-amino-acid chain; its full sequence is Hemoglobin subunit alpha-A (141 aa).

Positions 1–141 (VLSAADKTNV…VGTVLTAKYR (141 aa)) constitute a Globin domain. His-58 serves as a coordination point for O2. His-87 lines the heme b pocket.

It belongs to the globin family. As to quaternary structure, heterotetramer of two alpha chains and two beta chains. Red blood cells.

Its function is as follows. Involved in oxygen transport from the lung to the various peripheral tissues. In Turdus merula (Common blackbird), this protein is Hemoglobin subunit alpha-A (HBAA).